Reading from the N-terminus, the 383-residue chain is 1-deoxy-D-xylulose 5-phosphate reductoisomerase (383 aa).

Residues threonine 10, glycine 11, serine 12, isoleucine 13, glycine 36, lysine 37, asparagine 38, and asparagine 122 each coordinate NADPH. Residue lysine 123 participates in 1-deoxy-D-xylulose 5-phosphate binding. Glutamate 124 serves as a coordination point for NADPH. Residue aspartate 148 participates in Mn(2+) binding. Residues serine 149, glutamate 150, serine 174, and histidine 197 each contribute to the 1-deoxy-D-xylulose 5-phosphate site. Glutamate 150 is a Mn(2+) binding site. Glycine 203 provides a ligand contact to NADPH. 1-deoxy-D-xylulose 5-phosphate is bound by residues serine 210, asparagine 215, lysine 216, and glutamate 219. Glutamate 219 contributes to the Mn(2+) binding site.

It belongs to the DXR family. The cofactor is Mg(2+). Mn(2+) is required as a cofactor.

It catalyses the reaction 2-C-methyl-D-erythritol 4-phosphate + NADP(+) = 1-deoxy-D-xylulose 5-phosphate + NADPH + H(+). The protein operates within isoprenoid biosynthesis; isopentenyl diphosphate biosynthesis via DXP pathway; isopentenyl diphosphate from 1-deoxy-D-xylulose 5-phosphate: step 1/6. Functionally, catalyzes the NADPH-dependent rearrangement and reduction of 1-deoxy-D-xylulose-5-phosphate (DXP) to 2-C-methyl-D-erythritol 4-phosphate (MEP). This chain is 1-deoxy-D-xylulose 5-phosphate reductoisomerase, found in Bacillus velezensis (strain DSM 23117 / BGSC 10A6 / LMG 26770 / FZB42) (Bacillus amyloliquefaciens subsp. plantarum).